The primary structure comprises 104 residues: QPKSTPTLTMFPPSPEELQENKATLVCLISNFSPSGVTVAWKANGTPITQGVDTSNPTKEDNKYMASSFLHLTSDQWRSHNSFTCQVTHEGDTVEKSLSPAECL.

The Ig-like domain maps to 6-99; it reads PTLTMFPPSP…EGDTVEKSLS (94 aa). The cysteines at positions 27 and 85 are disulfide-linked.

The chain is Ig lambda-3 chain C region (Iglc3) from Mus musculus (Mouse).